A 70-amino-acid chain; its full sequence is ATP synthase subunit epsilon, mitochondrial (70 aa).

The protein belongs to the eukaryotic ATPase epsilon family. In terms of assembly, F-type ATPases have 2 components, CF(1) - the catalytic core - and CF(0) - the membrane proton channel. CF(1) has five subunits: alpha(3), beta(3), gamma(1), delta(1), epsilon(1). CF(0) has three main subunits: a, b and c.

Its subcellular location is the mitochondrion. It localises to the mitochondrion inner membrane. Its function is as follows. Mitochondrial membrane ATP synthase (F(1)F(0) ATP synthase or Complex V) produces ATP from ADP in the presence of a proton gradient across the membrane which is generated by electron transport complexes of the respiratory chain. F-type ATPases consist of two structural domains, F(1) - containing the extramembraneous catalytic core, and F(0) - containing the membrane proton channel, linked together by a central stalk and a peripheral stalk. During catalysis, ATP synthesis in the catalytic domain of F(1) is coupled via a rotary mechanism of the central stalk subunits to proton translocation. Part of the complex F(1) domain and of the central stalk which is part of the complex rotary element. Rotation of the central stalk against the surrounding alpha(3)beta(3) subunits leads to hydrolysis of ATP in three separate catalytic sites on the beta subunits. In Ipomoea batatas (Sweet potato), this protein is ATP synthase subunit epsilon, mitochondrial.